The chain runs to 197 residues: MRGNQLSYEDPFASAPVDTAPAEEAQQQTPTESPWDPPAQQTQTVEVRPAPADALSITFKGDGSYSAPWLVPKYASVTEALVDLGVDPDEVAKLGQGQKWFALMDRVTKMADHFANLGGGSKPNSGGGGSGGGGQQHQSRAPQQAQEAPGGEERFCKHGKMEFKSGVSKAGNTYALFSCTAPRNEQCPAQYPSKKNG.

Disordered stretches follow at residues 1–49 (MRGN…EVRP) and 114–157 (FANL…RFCK). Gly residues predominate over residues 117–135 (LGGGSKPNSGGGGSGGGGQ). A compositionally biased stretch (low complexity) spans 136–146 (QHQSRAPQQAQ).

The sequence is that of Gene 49 protein (49) from Mycobacterium phage D29 (Mycobacteriophage D29).